The sequence spans 967 residues: Isoleucine--tRNA ligase (967 aa).

The 'HIGH' region motif lies at 68–78; the sequence is PYANGTLHMGH. Glutamate 583 contributes to the L-isoleucyl-5'-AMP binding site. Residues 624–628 carry the 'KMSKS' region motif; sequence KMSKS. An ATP-binding site is contributed by lysine 627. Residues cysteine 937, cysteine 940, cysteine 957, and cysteine 960 each contribute to the Zn(2+) site.

It belongs to the class-I aminoacyl-tRNA synthetase family. IleS type 1 subfamily. In terms of assembly, monomer. Zn(2+) is required as a cofactor.

The protein resides in the cytoplasm. The catalysed reaction is tRNA(Ile) + L-isoleucine + ATP = L-isoleucyl-tRNA(Ile) + AMP + diphosphate. Catalyzes the attachment of isoleucine to tRNA(Ile). As IleRS can inadvertently accommodate and process structurally similar amino acids such as valine, to avoid such errors it has two additional distinct tRNA(Ile)-dependent editing activities. One activity is designated as 'pretransfer' editing and involves the hydrolysis of activated Val-AMP. The other activity is designated 'posttransfer' editing and involves deacylation of mischarged Val-tRNA(Ile). This chain is Isoleucine--tRNA ligase, found in Prochlorococcus marinus (strain NATL2A).